The sequence spans 218 residues: Dynein axonemal assembly factor 6 (218 aa).

Residues 66–103 (MGPGNIGPPKAKESKAIPEPRSDESENIWNPEEVPEGA) form a disordered region. Basic and acidic residues predominate over residues 75–89 (KAKESKAIPEPRSDE).

The protein belongs to the PIH1 family. Interacts with HSPA1A/B, HSP90AA1 and DNAI2. Interacts with DNAAF2 and DNAAF4. Specifically expressed in testis. Detected in pachytene spermatocytes from 5 weeks of age and in pachytene and diplotene spermatocytes of adult mice. Not detected in spermatids or mature sperm.

The protein resides in the cytoplasm. It localises to the golgi apparatus. Its subcellular location is the trans-Golgi network. In terms of biological role, plays a role in cytoplasmic pre-assembly of axonemal dynein. The sequence is that of Dynein axonemal assembly factor 6 from Mus musculus (Mouse).